The following is a 30-amino-acid chain: LIM and SH3 domain protein 1 (30 aa).

Met1 carries the N-acetylmethionine modification. The LIM zinc-binding domain occupies 5–30; the sequence is CARCGKIVYPTEKVNCLDKFWHKACF.

In terms of assembly, interacts with F-actin. Interacts with ANKRD54. Interacts with KBTBD10. Phosphorylated.

The protein resides in the cytoplasm. It is found in the cell cortex. Its subcellular location is the cytoskeleton. Functionally, plays an important role in the regulation of dynamic actin-based, cytoskeletal activities. Agonist-dependent changes in LASP1 phosphorylation may also serve to regulate actin-associated ion transport activities, not only in the parietal cell but also in certain other F-actin-rich secretory epithelial cell types. This is LIM and SH3 domain protein 1 (LASP1) from Sus scrofa (Pig).